The sequence spans 187 residues: Guanylate kinase (187 aa).

The Guanylate kinase-like domain occupies 5–183 (GRLTVLTGPS…ALKQLETHMQ (179 aa)). An ATP-binding site is contributed by 12 to 19 (GPSGVGKG).

This sequence belongs to the guanylate kinase family.

It localises to the cytoplasm. The catalysed reaction is GMP + ATP = GDP + ADP. It catalyses the reaction dZMP + ATP = dZDP + ADP. It functions in the pathway purine metabolism. Essential for recycling GMP and indirectly, cGMP. In terms of biological role, (Microbial infection) Catalyzes the phosphorylation of dZMP to dZDP, when the bacterium is infected by a phage that produces the substrate for the synthesis of dZTP (2- amino-2'-deoxyadenosine 5'-triphosphate), which is then used by the phage as a DNA polymerase substrate. This is Guanylate kinase from Synechococcus sp. (strain CC9902).